We begin with the raw amino-acid sequence, 837 residues long: Periplasmic nitrate reductase (837 aa).

Positions 1 to 32 form a signal peptide, tat-type signal; sequence MTSPKLDRRQMLKLEAAAIAAAAAGLPVPALA. Residues 44–100 form the 4Fe-4S Mo/W bis-MGD-type domain; that stretch reads LKWDKAACRFCGTGCSVMVATKENRVVATHGDIKAEVNRGLNCVKGYFLSKIMYGHD. Positions 51, 54, 58, and 86 each coordinate [4Fe-4S] cluster. Mo-bis(molybdopterin guanine dinucleotide) is bound by residues lysine 88, glutamine 155, asparagine 180, cysteine 184, 217–224, 248–252, 267–269, methionine 378, glutamine 382, asparagine 488, 514–515, lysine 537, aspartate 564, and 724–733; these read WGSNMAEM, STFEH, QTD, SD, and TGRVLEHWHS. Position 800 (tryptophan 800) interacts with substrate. Residues asparagine 808 and lysine 825 each coordinate Mo-bis(molybdopterin guanine dinucleotide).

It belongs to the prokaryotic molybdopterin-containing oxidoreductase family. NasA/NapA/NarB subfamily. In terms of assembly, component of the periplasmic nitrate reductase NapAB complex composed of NapA and NapB. The cofactor is [4Fe-4S] cluster. Mo-bis(molybdopterin guanine dinucleotide) is required as a cofactor. Post-translationally, predicted to be exported by the Tat system. The position of the signal peptide cleavage has not been experimentally proven.

It localises to the periplasm. The enzyme catalyses 2 Fe(II)-[cytochrome] + nitrate + 2 H(+) = 2 Fe(III)-[cytochrome] + nitrite + H2O. Functionally, catalytic subunit of the periplasmic nitrate reductase complex NapAB. Receives electrons from NapB and catalyzes the reduction of nitrate to nitrite. The sequence is that of Periplasmic nitrate reductase from Bradyrhizobium diazoefficiens (strain JCM 10833 / BCRC 13528 / IAM 13628 / NBRC 14792 / USDA 110).